The primary structure comprises 115 residues: Large ribosomal subunit protein uL18 (115 aa).

Belongs to the universal ribosomal protein uL18 family. In terms of assembly, part of the 50S ribosomal subunit; part of the 5S rRNA/L5/L18/L25 subcomplex. Contacts the 5S and 23S rRNAs.

Functionally, this is one of the proteins that bind and probably mediate the attachment of the 5S RNA into the large ribosomal subunit, where it forms part of the central protuberance. The protein is Large ribosomal subunit protein uL18 of Baumannia cicadellinicola subsp. Homalodisca coagulata.